A 60-amino-acid chain; its full sequence is Large ribosomal subunit protein bL32 (60 aa).

2 disordered regions span residues 1-22 and 34-60; these read MAVQ…HNAL and GETH…KSEA. The span at 9-19 shows a compositional bias: basic residues; that stretch reads SPSKRGMHRSH.

This sequence belongs to the bacterial ribosomal protein bL32 family.

The polypeptide is Large ribosomal subunit protein bL32 (Variovorax paradoxus (strain S110)).